The sequence spans 501 residues: Probable malate:quinone oxidoreductase (501 aa).

It belongs to the MQO family. FAD is required as a cofactor.

It carries out the reaction (S)-malate + a quinone = a quinol + oxaloacetate. It participates in carbohydrate metabolism; tricarboxylic acid cycle; oxaloacetate from (S)-malate (quinone route): step 1/1. The protein is Probable malate:quinone oxidoreductase of Geobacillus kaustophilus (strain HTA426).